We begin with the raw amino-acid sequence, 660 residues long: tRNA 5-methylaminomethyl-2-thiouridine biosynthesis bifunctional protein MnmC (660 aa).

The tract at residues 1 to 242 (MTDRIVPATL…KRAMLVGEFA (242 aa)) is tRNA (mnm(5)s(2)U34)-methyltransferase. The tract at residues 266 to 660 (IGAGLAGCAV…VRALRHGRVA (395 aa)) is FAD-dependent cmnm(5)s(2)U34 oxidoreductase.

It in the N-terminal section; belongs to the methyltransferase superfamily. tRNA (mnm(5)s(2)U34)-methyltransferase family. This sequence in the C-terminal section; belongs to the DAO family. FAD serves as cofactor.

It is found in the cytoplasm. The enzyme catalyses 5-aminomethyl-2-thiouridine(34) in tRNA + S-adenosyl-L-methionine = 5-methylaminomethyl-2-thiouridine(34) in tRNA + S-adenosyl-L-homocysteine + H(+). Its function is as follows. Catalyzes the last two steps in the biosynthesis of 5-methylaminomethyl-2-thiouridine (mnm(5)s(2)U) at the wobble position (U34) in tRNA. Catalyzes the FAD-dependent demodification of cmnm(5)s(2)U34 to nm(5)s(2)U34, followed by the transfer of a methyl group from S-adenosyl-L-methionine to nm(5)s(2)U34, to form mnm(5)s(2)U34. The sequence is that of tRNA 5-methylaminomethyl-2-thiouridine biosynthesis bifunctional protein MnmC from Burkholderia pseudomallei (strain 1106a).